Reading from the N-terminus, the 181-residue chain is Adenine phosphoribosyltransferase (181 aa).

The protein belongs to the purine/pyrimidine phosphoribosyltransferase family. In terms of assembly, homodimer.

It localises to the cytoplasm. It carries out the reaction AMP + diphosphate = 5-phospho-alpha-D-ribose 1-diphosphate + adenine. The protein operates within purine metabolism; AMP biosynthesis via salvage pathway; AMP from adenine: step 1/1. Catalyzes a salvage reaction resulting in the formation of AMP, that is energically less costly than de novo synthesis. The polypeptide is Adenine phosphoribosyltransferase (Shewanella loihica (strain ATCC BAA-1088 / PV-4)).